A 299-amino-acid chain; its full sequence is Phosphoribosylaminoimidazole-succinocarboxamide synthase (299 aa).

This sequence belongs to the SAICAR synthetase family.

It carries out the reaction 5-amino-1-(5-phospho-D-ribosyl)imidazole-4-carboxylate + L-aspartate + ATP = (2S)-2-[5-amino-1-(5-phospho-beta-D-ribosyl)imidazole-4-carboxamido]succinate + ADP + phosphate + 2 H(+). It participates in purine metabolism; IMP biosynthesis via de novo pathway; 5-amino-1-(5-phospho-D-ribosyl)imidazole-4-carboxamide from 5-amino-1-(5-phospho-D-ribosyl)imidazole-4-carboxylate: step 1/2. The protein is Phosphoribosylaminoimidazole-succinocarboxamide synthase of Maridesulfovibrio salexigens (strain ATCC 14822 / DSM 2638 / NCIMB 8403 / VKM B-1763) (Desulfovibrio salexigens).